The following is a 300-amino-acid chain: Polyamine aminopropyltransferase (300 aa).

Positions 4–237 (WHWHIEWQTP…GLWGFVYASD (234 aa)) constitute a PABS domain. Residue Gln-33 coordinates S-methyl-5'-thioadenosine. His-64 and Glu-88 together coordinate spermidine. S-methyl-5'-thioadenosine is bound by residues Asp-108 and 140–141 (DG). Asp-158 acts as the Proton acceptor in catalysis. Pro-167 lines the S-methyl-5'-thioadenosine pocket.

Belongs to the spermidine/spermine synthase family. As to quaternary structure, homodimer or homotetramer.

It is found in the cytoplasm. The catalysed reaction is S-adenosyl 3-(methylsulfanyl)propylamine + putrescine = S-methyl-5'-thioadenosine + spermidine + H(+). The protein operates within amine and polyamine biosynthesis; spermidine biosynthesis; spermidine from putrescine: step 1/1. In terms of biological role, catalyzes the irreversible transfer of a propylamine group from the amino donor S-adenosylmethioninamine (decarboxy-AdoMet) to putrescine (1,4-diaminobutane) to yield spermidine. In Sulfurisphaera tokodaii (strain DSM 16993 / JCM 10545 / NBRC 100140 / 7) (Sulfolobus tokodaii), this protein is Polyamine aminopropyltransferase.